The following is a 434-amino-acid chain: Zinc finger protein kipf (434 aa).

In terms of domain architecture, ZAD spans 7 to 88 (NVCRTCMDET…EQSYQHFFRV (82 aa)). The Zn(2+) site is built by Cys-9, Cys-12, Cys-61, and Cys-64. The disordered stretch occupies residues 117–173 (QLKSDRQQDTQQMTKTQKPDDDLSQKQTLQAKLQEGNIDGPPESFTLHPRKRTCRTE). The segment at 197-219 (YNCPHCSKRFCSQTQLRTHITDL) adopts a C2H2-type 1; degenerate zinc-finger fold. 3 consecutive C2H2-type zinc fingers follow at residues 221 to 243 (NRCP…LRNH), 249 to 271 (HKCF…LRTH), and 277 to 299 (LSCS…RREH). A disordered region spans residues 295-328 (HRREHKQRPGSSKSESTKDPDSDDSDQAQDLKPK). Ser-316 and Ser-319 each carry phosphoserine. 3 C2H2-type zinc fingers span residues 348 to 370 (PICD…MLTH), 377 to 399 (KKCT…ERGH), and 404 to 427 (FRCE…KRIH).

In terms of assembly, homodimer; mediated by the ZAD domain. Interacts (via C2H2 type zinc finger 4) with rhi/rhino (via Chromo domain). Dimerization is required for association with DNA and interaction with rhi/rhino. Primarily expressed in ovaries and absent from testes. In ovaries very low levels in germline stem cells and cystoblasts but abundant in developing cysts and polyploid nurse cells.

The protein localises to the nucleus. The protein resides in the chromosome. In terms of biological role, DNA-binding zinc finger protein that recruits chromo domain protein rhino/rhi to specific chromatin regions enriched in H3K9me2/3 histone methylation, mediating piRNA (piwi-interacting RNA) biogenesis. May bind to GC rich DNA sequences including a 5'-GRGGN-3' sequence motif. Nucleates rhi/rhino accumulation and stabilizes its expansion. Involved in piRNA transposon repression, particularly in the female ovary during oogenesis. This Drosophila melanogaster (Fruit fly) protein is Zinc finger protein kipf.